Consider the following 156-residue polypeptide: Small ribosomal subunit protein uS7 (156 aa).

The protein belongs to the universal ribosomal protein uS7 family. As to quaternary structure, part of the 30S ribosomal subunit. Contacts proteins S9 and S11.

In terms of biological role, one of the primary rRNA binding proteins, it binds directly to 16S rRNA where it nucleates assembly of the head domain of the 30S subunit. Is located at the subunit interface close to the decoding center, probably blocks exit of the E-site tRNA. This chain is Small ribosomal subunit protein uS7, found in Tropheryma whipplei (strain TW08/27) (Whipple's bacillus).